Consider the following 150-residue polypeptide: Troponin C, isotype gamma (150 aa).

Methionine 1 bears the N-acetylmethionine mark. 4 consecutive EF-hand domains span residues 7–42 (EQLS…MGVK), 43–78 (ISEK…FLIE), 83–118 (ALKA…LDNR), and 119–150 (LTED…MMSG). Residues aspartate 56, aspartate 58, serine 60, glutamate 62, and glutamate 67 each coordinate Ca(2+). Ca(2+)-binding residues include aspartate 132, aspartate 134, serine 136, threonine 138, and glutamate 143.

This sequence belongs to the troponin C family.

In terms of biological role, troponin is the central regulatory protein of striated muscle contraction. Tn consists of three components: Tn-I which is the inhibitor of actomyosin ATPase, Tn-T which contains the binding site for tropomyosin and Tn-C. The binding of calcium to Tn-C abolishes the inhibitory action of Tn on actin filaments. This chain is Troponin C, isotype gamma, found in Astacus leptodactylus (Turkish narrow-clawed crayfish).